We begin with the raw amino-acid sequence, 427 residues long: tRNA(Ile)-lysidine synthase (427 aa).

27–32 (SGGVDS) provides a ligand contact to ATP.

It belongs to the tRNA(Ile)-lysidine synthase family.

Its subcellular location is the cytoplasm. It carries out the reaction cytidine(34) in tRNA(Ile2) + L-lysine + ATP = lysidine(34) in tRNA(Ile2) + AMP + diphosphate + H(+). Functionally, ligates lysine onto the cytidine present at position 34 of the AUA codon-specific tRNA(Ile) that contains the anticodon CAU, in an ATP-dependent manner. Cytidine is converted to lysidine, thus changing the amino acid specificity of the tRNA from methionine to isoleucine. This chain is tRNA(Ile)-lysidine synthase, found in Streptococcus equi subsp. equi (strain 4047).